The sequence spans 244 residues: U4/U6.U5 tri-snRNP-associated protein 3-like protein C162.01c (244 aa).

Composition is skewed to basic and acidic residues over residues 1–11 (MSSSRSGEHRR) and 20–116 (ESSR…RRDG). Disordered regions lie at residues 1 to 192 (MSSS…EDEA) and 223 to 244 (KKTK…LDNE). A phosphoserine mark is found at S121 and S140. Residues 126-182 (GLERKREHEKLQAPSPKEEEERPVDQGDKMDGVKEDKDGSLEVGKSHDAMTRTKSAE) show a composition bias toward basic and acidic residues. The span at 183 to 192 (EEIVEQEDEA) shows a compositional bias: acidic residues.

Belongs to the SNUT3 family. As to quaternary structure, part of a tri-snRNP complex.

Its subcellular location is the nucleus. May play a role in mRNA splicing. This Schizosaccharomyces pombe (strain 972 / ATCC 24843) (Fission yeast) protein is U4/U6.U5 tri-snRNP-associated protein 3-like protein C162.01c.